The chain runs to 120 residues: U-scoloptoxin(20)-Cw1a (120 aa).

Positions 1 to 26 (MNSTDRLLGVLLAVVALILLIRISEA) are cleaved as a signal peptide. The disordered stretch occupies residues 87–106 (SSGKSLTTTKDSSESRKKEI). Over residues 97–106 (DSSESRKKEI) the composition is skewed to basic and acidic residues.

This sequence belongs to the scoloptoxin-20 family. Post-translationally, contains 3 disulfide bonds. As to expression, expressed by the venom gland.

The protein resides in the secreted. In Cormocephalus westwoodi (Westwood's green centipede), this protein is U-scoloptoxin(20)-Cw1a.